The sequence spans 2411 residues: MAKPVVKIDVEPESHFAKQVQSCFPQFEIEAVQTTPNDHAHARAFSHLATKLIEMETAKDQIILDIGSAPARRLYSEHKYHCVCPMKCTEDPERMLGYARKLIAGSAKGKAEKLRDLRDVLATPDIETQSLCLHTDASCRYRGDVAVYQDVYAIDAPTTLYHQALKGVRTAYWIGFDTTPFMYDALAGAYPLYSTNWADEQVLESRNIGLCSDKVSEGGKKGRSILRKKFLKQSDRVMFSVGSTLYTESRKLLQSWHLPSTFHLKGKSSFTCRCDTIVSCEGYVLKKITMCPGVTGKPIGYAVTHHKEGFVVGKVTDTIRGERVSFAVCTYVPTTLCDQMTGILATEVTADDAQKLLVGLNQRIVVNGRTQRNTNTMKNYLLPLVAQALAKWAKEAKQDMEDERPLNERQRTLTCLCCWAFKRNKRHAIYKRPDTQSIVKVPCEFTSFPLVSLWSAGMSISLRQKLKMMLQARQPTQIAAVTEELIQEAAAVEQEAVDTANAELDHAAWPSIVDTTERHVEVEVEELDQRAGEGVVETPRNSIKVSTQIGDALIGSYLILSPQAVLRSEKLACIHDLAEQVKLVTHSGRSGRYAVDKYXGRVLVPTGVAIDIQSFQALSESATLVYNEREFVNRKLWHIAVYGAALNTDEEGYEKVPVERAESDYVFDVDQKMCLKKEQASGWVLCGELVNPPFHEFAYEGLRTRPSAPYKVHTVGVYGVPGSGKSAIIKNTVTMSDLVLSGKKENCLEIMNDVLKHRALRITAKTVDSVLLNGVKHTPNILYIDEAFSCHAGTLLATIAIVRPKQKVVLCGDPKQCGFFNMMQLKVNYNHDICSEVFHKSISRRCTQDITAIVSKLHYQDRMRTTNPRKGDIIIDTTGTTKPAKTDLILTCFRGWVKQLQQDYRGNEVMTAAASQGLTRASVYAVRTKVNENPLYAQTSEHVNVLLTRTENKLVWKTLSTDPWIKTLTNPPRGHYTATIAEWEAEHQGIMKAIQGYAPPVNTFMNKVNVCWAKTLTPVLETAGISLSAEDWSELLPPFAQDVAYSPEVALNIICTKMYGFDLDTGLFSRPSVPMTYTKDHWDNRVGGKMYGFSQQAYDQLARRHPYLRGREKSGMQIVVTEMRIQRPRSDANIIPINRRLPHSLVATHEYRRAARAEEFFTTTRGYTMLLVSEYNMNLPNKKITWLAPIGTQGAHHTANLNLGIPPLLGSFDAVVVNMPTPFRNHHYQQCEDHAMKLQMLAGDALRHIKPGGSLWVKAYGYADRHSEHVVLALARKFKSFRVTQPSCVTSNTEVFLHFSIFDNGKRAIALHSANRKANSIFQNTFLPAGSAPAYRVKRGDISNAPEDAVVNAANQQGVKGAGVCGAIYRKWPDAFGDVATPTGTAVSKSVQDKLVIHAVGPNFSKCSEEEGDRDLASAYRAAAEIVMDKKITTVAVPLLSTGIYAGGKNRVEQSLNHLFTAFDNTDADVTIYCMDKTWEKKIKEAIDHRTSVEMVQDDVQLEEELVRVHPLSSLAGRKGYSTDSGRVFSYLEGTKFHQTAVDIAEMQVLWPALKESNEQIVAYTLGESMDQIRGKCPTEDTDASTPPRTVPCLCRYAMTPERVYRLKCTNTTQFTVCSSFELPKYHIQGVQRVKCERIIILDPTVPPTYKRPCIRRYPSTISCNSSEDSRSLSTFSVSSDSSIGSLPVGDTRPIPAPRTIFRPVPAPRAPVLRTTPPPKPPRTFTVRAEVHQAPPTPVPPPRPKRAAKLAREMHPGFTFGDFGEHEVEELTASPLTFGDFAEGEIQGMGVEFEXLGRAGGYIFSSDTGPGHLQQRSVLQNCTAECIYEPAKLEKIHAPKLDKTKEDILRSKYQMKPSEANKSRYQSRKVENMKAEIVGRLLDGLGEYLGTEHPVECYRITYPVPIYSTSDLRGLSSAKTAVRACNAFLEANFPSVTSYKITDEYDAYLDMVDGSESCLDRSSFSPSRLRSFPKTHSYLDPQINSAVPSPFQNTLQNVLAAATKRNCNVTQMRELPTYDSAVLNVEAFRKYACKPDVWDEYRDNPICITTENVTTYVAKLKGPKAAALFAKTHNLIPLHQVPMDKFTVDMKRDVKVTPGTKHTEERPKVQVIQAAEPLATAYLCGIHRELVRRLNNALFPNIHTLFDMSAEDFDAIIAEHFKHGDHVLETDIASFDKSQDDSMALTALMILEDLGVDQNLMNLIEAAFGEIVSTHLPTGTRFKFGAMMKSGMFLTLFVNTILNVVIACRVLEDQLAQSPWPAFIGDDNIIHGIISDKLMADRCATWMNMEVKILDSIVGIRPPYFCGGFIVCDDVTGTACRVADPLKRLFKLGKPLPLDDGQDEDRRRALHDEVKTWSRVGLRHRVCEAIEDRYAVHSSELVLLALTTLSKNLKSFRNIRGKPIHLYGGPK.

An Alphavirus-like MT domain is found at 30 to 257 (EAVQTTPNDH…ESRKLLQSWH (228 aa)). Positions 242-261 (GSTLYTESRKLLQSWHLPST) are nsP1 membrane-binding. 2 S-palmitoyl cysteine; by host lipidation sites follow: C415 and C417. The 153-residue stretch at 688-840 (ELVNPPFHEF…HDICSEVFHK (153 aa)) folds into the (+)RNA virus helicase ATP-binding domain. A ribonucleoside 5'-triphosphate is bound at residue 719–726 (GVPGSGKS). The (+)RNA virus helicase C-terminal domain maps to 841-989 (SISRRCTQDI…IAEWEAEHQG (149 aa)). In terms of domain architecture, Peptidase C9 spans 1002 to 1325 (NTFMNKVNVC…RKANSIFQNT (324 aa)). The segment at 1003–1022 (TFMNKVNVCWAKTLTPVLET) is nucleolus localization signal. The active-site For cysteine protease nsP2 activity is C1011. Residues 1056-1065 (TKMYGFDLDT) carry the Nuclear export signal motif. H1081 functions as the For cysteine protease nsP2 activity in the catalytic mechanism. The short motif at 1180–1184 (PNKKI) is the Nuclear localization signal element. The Macro domain maps to 1332–1491 (APAYRVKRGD…KIKEAIDHRT (160 aa)). Residues D1341, N1355, G1363, G1443, I1444, and Y1445 each contribute to the ADP-D-ribose site. Residues C1593, C1595, C1618, and C1636 each coordinate Zn(2+). The interval 1681–1720 (DSSIGSLPVGDTRPIPAPRTIFRPVPAPRAPVLRTTPPPK) is disordered. 2 consecutive short sequence motifs (FGDF; binding to host G3BP1) follow at residues 1760 to 1763 (FGDF) and 1778 to 1781 (FGDF). In terms of domain architecture, RdRp catalytic spans 2165-2280 (DHVLETDIAS…HGIISDKLMA (116 aa)).

As to quaternary structure, interacts with non-structural protein 3. Interacts with RNA-directed RNA polymerase nsP4. Interacts with protease nsP2. interacts with itself. In terms of assembly, interacts with mRNA-capping enzyme nsP1. Interacts with host DDX1. Interacts with host DDX3. Interacts (via C-terminus) with host G3BP1; this interaction inhibits the formation of host stress granules on viral mRNAs and the nsp3-G3BP1 complexes bind viral RNAs and probably orchestrate the assembly of viral replication complexes. Interacts (via C-terminus) with host G3BP2; this interaction inhibits the formation of host stress granules on viral mRNAs and the nsp3-G3BP2 complexes bind viral RNAs and probably orchestrate the assembly of viral replication complexes. Interacts with mRNA-capping enzyme nsP1. Interacts with protease nsP2. interacts with itself. As to quaternary structure, interacts with RNA-directed RNA polymerase nsP4. Interacts with mRNA-capping enzyme nsP1. Interacts with KPNA1/karyopherin-alpha1; this interaction probably allows the active transport of protease nsP2 into the host nucleus. Requires Mg(2+) as cofactor. The cofactor is Mn(2+). Post-translationally, specific enzymatic cleavages in vivo yield mature proteins. The processing of the polyprotein is temporally regulated. In early stages (1.7 hpi), P1234 is first cleaved in trans through its nsP2 protease activity, releasing P123' and nsP4, which associate to form the early replication complex. At the same time, P1234 is also cut at the nsP1/nsP2 site early in infection but with lower efficiency. After replication of the viral minus-strand RNAs (4 hpi), the polyproteins are cut at the nsP1/nsP2 and nsP2/nsP3 sites very efficiently, preventing accumulation of P123' and P1234 and allowing the formation of the late replication complex. NsP3'/nsP4 site is not cleaved anymore and P34 is produced rather than nsP4. In terms of processing, specific enzymatic cleavages in vivo yield mature proteins. The processing of the polyprotein is temporally regulated. In early stages (1.7 hpi), P123 is cleaved at the nsP1/nsP2 site with low efficiency. After replication of the viral minus-strand RNAs (4 hpi), the polyproteins are cut at the nsP1/nsP2 and nsP2/nsP3 sites very efficiently, preventing accumulation of P123 and allowing the formation of the late replication complex. Specific enzymatic cleavages in vivo yield mature proteins. The processing of the polyprotein is temporally regulated. In early stages (1.7 hpi), P123' is cleaved at the nsP1/nsP2 site with low efficiency. After replication of the viral minus-strand RNAs (4 hpi), the polyproteins are cut at the nsP1/nsP2 and nsP2/nsP3 sites very efficiently, preventing accumulation of P123' and allowing the formation of the late replication complex. Post-translationally, palmitoylated by host palmitoyltransferases ZDHHC2 and ZDHHC19. In terms of processing, phosphorylated by host on serines and threonines. Ubiquitinated; targets the protein for rapid degradation via the ubiquitin system. Nsp4 is present in extremely low quantities due to low frequency of translation through the amber stop-codon and the degradation by the ubiquitin pathway.

Its subcellular location is the host cytoplasmic vesicle membrane. The protein resides in the host cell membrane. The protein localises to the host cell projection. It localises to the host filopodium. It is found in the host nucleus. Its subcellular location is the host cytoplasm. The catalysed reaction is GTP + S-adenosyl-L-methionine = N(7)-methyl-GTP + S-adenosyl-L-homocysteine. It carries out the reaction N(7)-methyl-GTP + L-histidyl-[protein] = N(tele)-(N(7)-methylguanosine 5'-phospho)-L-histidyl-[protein] + diphosphate. It catalyses the reaction N(tele)-(N(7)-methylguanosine 5'-phospho)-L-histidyl-[protein] + a 5'-end diphospho-(purine-ribonucleoside) in mRNA + H(+) = a 5'-end (N(7)-methyl 5'-triphosphoguanosine)-(purine-ribonucleoside) in mRNA + L-histidyl-[protein]. The enzyme catalyses a 5'-end triphospho-ribonucleoside in mRNA + H2O = a 5'-end diphospho-ribonucleoside in mRNA + phosphate + H(+). The catalysed reaction is a ribonucleoside 5'-triphosphate + H2O = a ribonucleoside 5'-diphosphate + phosphate + H(+). It carries out the reaction ATP + H2O = ADP + phosphate + H(+). It catalyses the reaction RNA(n) + a ribonucleoside 5'-triphosphate = RNA(n+1) + diphosphate. The enzyme catalyses RNA(n) + ATP = RNA(n)-3'-adenine ribonucleotide + diphosphate. The catalysed reaction is 4-O-(ADP-D-ribosyl)-L-aspartyl-[protein] + H2O = L-aspartyl-[protein] + ADP-D-ribose + H(+). It carries out the reaction 5-O-(ADP-D-ribosyl)-L-glutamyl-[protein] + H2O = L-glutamyl-[protein] + ADP-D-ribose + H(+). It catalyses the reaction ADP-alpha-D-ribose 1''-phosphate + H2O = ADP-D-ribose + phosphate. Inactive precursor of the viral replicase, which is activated by cleavages carried out by the viral protease nsP2. Its function is as follows. The early replication complex formed by the polyprotein P123 and nsP4 synthesizes minus-strand RNAs. As soon P123 is cleaved into mature proteins, the plus-strand RNAs synthesis begins. In terms of biological role, the early replication complex formed by the polyprotein P123' and nsP4 synthesizes minus-strand RNAs. Polyprotein P123' is a short-lived polyprotein that accumulates during early stage of infection. As soon P123' is cleaved into mature proteins, the plus-strand RNAs synthesis begins. Functionally, cytoplasmic capping enzyme that catalyzes two virus-specific reactions: methyltransferase and nsP1 guanylyltransferase. mRNA-capping is necessary since all viral RNAs are synthesized in the cytoplasm, and host capping enzymes are restricted to the nucleus. The enzymatic reaction involves a covalent link between 7-methyl-GMP and nsP1, whereas eukaryotic capping enzymes form a covalent complex only with GMP. nsP1 capping consists in the following reactions: GTP is first methylated into 7-methyl-GMP and then is covalently linked to nsP1 to form the m7GMp-nsP1 complex from which 7-methyl-GMP complex is transferred to the mRNA to create the cap structure. NsP1 is needed for the initiation of the minus-strand RNAs synthesis. Probably serves as a membrane anchor for the replication complex composed of nsP1-nsP4. Palmitoylated nsP1 is remodeling host cell cytoskeleton, and induces filopodium-like structure formation at the surface of the host cell. Multifunctional protein whose N-terminus is part of the RNA polymerase complex and displays NTPase, RNA triphosphatase and helicase activities. NTPase and RNA triphosphatase are involved in viral RNA capping and helicase keeps a check on the dsRNA replication intermediates. The C-terminus harbors a protease that specifically cleaves the polyproteins and releases the mature proteins. Required for the shutoff of minus-strand RNAs synthesis. Specifically inhibits the host IFN response by promoting the nuclear export of host STAT1. Also inhibits host transcription by inducing rapid proteasome-dependent degradation of POLR2A, a catalytic subunit of the RNAPII complex. The resulting inhibition of cellular protein synthesis serves to ensure maximal viral gene expression and to evade host immune response. Its function is as follows. Seems to be essential for minus-strand RNAs and subgenomic 26S mRNAs synthesis. Displays mono-ADP-ribosylhydrolase activity. ADP-ribosylation is a post-translational modification that controls various processes of the host cell and the virus probably needs to revert it for optimal viral replication. Binds proteins of FXR family and sequesters them into the viral RNA replication complexes thereby inhibiting the formation of host stress granules on viral mRNAs. The nsp3-FXR complexes bind viral RNAs and probably orchestrate the assembly of viral replication complexes, thanks to the ability of FXR family members to self-assemble and bind DNA. In terms of biological role, seems to be essential for minus-strand RNAs and subgenomic 26S mRNAs synthesis. Displays mono-ADP-ribosylhydrolase activity. ADP-ribosylation is a post-translantional modification that controls various processes of the host cell and the virus probably needs to revert it for optimal viral replication. Binds proteins of G3BP family and sequesters them into the viral RNA replication complexes thereby inhibiting the formation of host stress granules on viral mRNAs. The nsp3'-G3BP complexes bind viral RNAs and probably orchestrate the assembly of viral replication complexes, thanks to the ability of G3BP family members to self-assemble and bind DNA. Functionally, RNA dependent RNA polymerase. Replicates genomic and antigenomic RNA by recognizing replications specific signals. The early replication complex formed by the polyprotein P123 and nsP4 synthesizes minus-strand RNAs. The late replication complex composed of fully processed nsP1-nsP4 is responsible for the production of genomic and subgenomic plus-strand RNAs. The core catalytic domain of nsP4 also possesses terminal adenylyltransferase (TATase) activity that is probably involved in maintenance and repair of the poly(A) tail, an element required for replication of the viral genome. The protein is Polyprotein P1234 of Barmah forest virus (BFV).